The following is a 157-amino-acid chain: Lipoprotein signal peptidase (157 aa).

3 consecutive transmembrane segments (helical) span residues 10–30 (LIFIVVFSLIFGTDQAIKYAI), 58–78 (FLEGGLKYLQILLILGLFIFL), and 84–104 (LFKNHAIEFGMVFGAGVSNVL). Catalysis depends on residues Asp-114 and Asp-131. A helical membrane pass occupies residues 122-142 (FDFAIFNFADVMIDVGVGVLL).

This sequence belongs to the peptidase A8 family.

Its subcellular location is the cell inner membrane. The catalysed reaction is Release of signal peptides from bacterial membrane prolipoproteins. Hydrolyzes -Xaa-Yaa-Zaa-|-(S,diacylglyceryl)Cys-, in which Xaa is hydrophobic (preferably Leu), and Yaa (Ala or Ser) and Zaa (Gly or Ala) have small, neutral side chains.. It participates in protein modification; lipoprotein biosynthesis (signal peptide cleavage). This protein specifically catalyzes the removal of signal peptides from prolipoproteins. The sequence is that of Lipoprotein signal peptidase from Helicobacter pylori (strain Shi470).